The chain runs to 285 residues: Putative cysteine-rich repeat secretory protein 14 (285 aa).

Residues 1 to 30 (MSSFCLSKHLILVPILVMMAQLLLIRNVLS) form the signal peptide. 2 consecutive Gnk2-homologous domains span residues 37-143 (YLYH…SIST) and 161-273 (RPNA…RYPF).

This sequence belongs to the cysteine-rich repeat secretory protein family.

It is found in the secreted. The sequence is that of Putative cysteine-rich repeat secretory protein 14 (CRRSP14) from Arabidopsis thaliana (Mouse-ear cress).